A 130-amino-acid polypeptide reads, in one-letter code: Protein ApaG (130 aa).

Residues 3–127 (RATTRKIQVT…FSLDVPHMAR (125 aa)) enclose the ApaG domain.

This is Protein ApaG from Azorhizobium caulinodans (strain ATCC 43989 / DSM 5975 / JCM 20966 / LMG 6465 / NBRC 14845 / NCIMB 13405 / ORS 571).